A 336-amino-acid polypeptide reads, in one-letter code: Dual specificity mitogen-activated protein kinase kinase sek-1 (336 aa).

A Protein kinase domain is found at Leu-50–Met-311. Residues Leu-56–Val-64 and Lys-79 contribute to the ATP site. The Proton acceptor role is filled by Asp-176. Ser-204 is modified (phosphoserine). Thr-208 carries the post-translational modification Phosphothreonine.

The protein belongs to the protein kinase superfamily. STE Ser/Thr protein kinase family. MAP kinase kinase subfamily. As to quaternary structure, interacts with nsy-1. Interacts with unc-16. Mg(2+) serves as cofactor. In terms of tissue distribution, expressed in linker cell in males.

The catalysed reaction is L-seryl-[protein] + ATP = O-phospho-L-seryl-[protein] + ADP + H(+). The enzyme catalyses L-threonyl-[protein] + ATP = O-phospho-L-threonyl-[protein] + ADP + H(+). It carries out the reaction L-tyrosyl-[protein] + ATP = O-phospho-L-tyrosyl-[protein] + ADP + H(+). With respect to regulation, activated by nsy-1-mediated phosphorylation. Functionally, dual specificity protein kinase which acts as an essential component of the p38 signal transduction pathway which is also composed of upstream effector nsy-1 and downstream effector pmk-1. May phosphorylate pmk-1. Downstream of CaMKII unc-43 and adapter protein tir-1, plays a role in determining asymmetric cell fates in olfactory AWC neurons during neuronal development. Activation results in the repression of odorant receptor str-2 expression in one of the 2 AWC neurons. Involved in resistance to pathogenic Gram-positive and Gram-negative bacterial and fungal infection. Involved in resistance to the nematotoxic C.cinerea galectin Cgl2. Probably by promoting pmk-1-mediated activation of skn-1, involved in the up-regulation of gcs-1 and glutathione-S-transferase gst-4 expression upon bacterial infection. Probably downstream of tir-1, required for the expression of antimicrobial peptide nlp-29 in the epidermis in response to fungal infection or physical injury. Regulates susceptibility of B.thuringiensis pore-forming toxin Cry5B and Cry21A. Involved in the response to oxidative stress. May regulate transcription factor daf-16 localization during oxidative stress. By phosphorylating pmk-1, regulates skn-1 localization during oxidative stress. By phosphorylating and activating pmk-1, plays a role in the stabilization of transcription factor rnt-1 in the intestine during oxidative stress. Up-regulates expression of gcs-1 in intestine upon arsenite treatment. Regulates germline proliferation in response to osmotic stress, starvation and germline apoptosis induced by heavy metals, such as Cu(2+). In association with mek-1, regulates germline cell apoptosis in response to oxidative, osmotic and heat shock stresses. Plays a role downstream of tir-1/nsy-1 in regulating susceptibility to anoxia. In males, by regulating pqn-41 expression, involved in non-apoptotic death of the linker cell which guides gonad elongation during larval development. Involved in egg laying. The chain is Dual specificity mitogen-activated protein kinase kinase sek-1 from Caenorhabditis elegans.